A 784-amino-acid chain; its full sequence is Phosphate transporter PHO1 homolog 1 (784 aa).

Residues 1 to 387 (MVKFTKQFEG…HHRKESHSVT (387 aa)) are Cytoplasmic-facing. Residues 2–335 (VKFTKQFEGQ…GKQILPIYLK (334 aa)) form the SPX domain. Residues 388–408 (FFIGLFTGCFVALLAGYIIVA) traverse the membrane as a helical segment. The Extracellular portion of the chain corresponds to 409-429 (HLTGMYRQHSANTFYMETAYP). The chain crosses the membrane as a helical span at residues 430-450 (VLSMFGLLFLHLFLYGCNIFM). Topologically, residues 451–474 (WRKARINYSFIFELGSKNELKYRD) are cytoplasmic. A helical membrane pass occupies residues 475–495 (VFLICTASMSAIAGVMFVHLS). Residues 496–507 (LLEKGYSFRQVQ) are Extracellular-facing. The helical transmembrane segment at 508–528 (VIPGLLLLGFLLILICPLNIF) threads the bilayer. Topologically, residues 529 to 654 (YKSSRYRLIS…TKVAYEKERS (126 aa)) are cytoplasmic. The region spanning 593-784 (MRVKYYRDLA…LPFREVDEED (192 aa)) is the EXS domain. A helical membrane pass occupies residues 655-675 (LGWLCLVVAMSSVATIYQLYW). The Extracellular segment spans residues 676–703 (DFVKDWGLLQHNSNNPWLRNQLMLRQKS). Residues 704-724 (IYYFSMVLNLVLRLAWLQTVL) traverse the membrane as a helical segment. Residues 725 to 784 (HSSFEHVDYRVTGLFLAALEVIRRGQWNFYRLENEHLNNAGKFRAVKTVPLPFREVDEED) lie on the Cytoplasmic side of the membrane.

The protein belongs to the SYG1 (TC 2.A.94) family. Expressed in vascular cylinder of roots, leaves, stems, petals, sepals and filaments. Expressed in receptacle, stigma apex and anther connective tissue.

The protein resides in the cell membrane. Its function is as follows. Contributes to the loading of inorganic phosphate (Pi) into the root xylem vessels. The chain is Phosphate transporter PHO1 homolog 1 (PHO1-H1) from Arabidopsis thaliana (Mouse-ear cress).